Here is a 316-residue protein sequence, read N- to C-terminus: Ribose-phosphate pyrophosphokinase (316 aa).

Residues aspartate 37–glutamate 39 and arginine 96–glutamine 97 each bind ATP. 2 residues coordinate Mg(2+): histidine 131 and aspartate 171. Lysine 195 is a catalytic residue. Residues arginine 197, aspartate 221, and aspartate 225–threonine 229 contribute to the D-ribose 5-phosphate site.

Belongs to the ribose-phosphate pyrophosphokinase family. Class I subfamily. As to quaternary structure, homohexamer. Requires Mg(2+) as cofactor.

It localises to the cytoplasm. The catalysed reaction is D-ribose 5-phosphate + ATP = 5-phospho-alpha-D-ribose 1-diphosphate + AMP + H(+). Its pathway is metabolic intermediate biosynthesis; 5-phospho-alpha-D-ribose 1-diphosphate biosynthesis; 5-phospho-alpha-D-ribose 1-diphosphate from D-ribose 5-phosphate (route I): step 1/1. Involved in the biosynthesis of the central metabolite phospho-alpha-D-ribosyl-1-pyrophosphate (PRPP) via the transfer of pyrophosphoryl group from ATP to 1-hydroxyl of ribose-5-phosphate (Rib-5-P). The chain is Ribose-phosphate pyrophosphokinase from Haemophilus ducreyi (strain 35000HP / ATCC 700724).